Reading from the N-terminus, the 623-residue chain is Chaperone protein DnaK (623 aa).

Threonine 197 is subject to Phosphothreonine; by autocatalysis. Positions 595–615 are enriched in basic and acidic residues; the sequence is AENMYKKDEPNTANDKKKKDD. Positions 595-623 are disordered; it reads AENMYKKDEPNTANDKKKKDDDVIDAEVE.

The protein belongs to the heat shock protein 70 family.

Acts as a chaperone. The chain is Chaperone protein DnaK from Campylobacter jejuni subsp. doylei (strain ATCC BAA-1458 / RM4099 / 269.97).